The primary structure comprises 358 residues: tRNA-specific 2-thiouridylase MnmA (358 aa).

ATP contacts are provided by residues 8 to 15 (GMSGGVDS) and Met34. Catalysis depends on Cys103, which acts as the Nucleophile. Cys103 and Cys199 are disulfide-bonded. An ATP-binding site is contributed by Gly127. The interaction with tRNA stretch occupies residues 149–151 (KDQ). Cys199 acts as the Cysteine persulfide intermediate in catalysis. Positions 305 to 306 (RY) are interaction with tRNA.

This sequence belongs to the MnmA/TRMU family.

The protein localises to the cytoplasm. It catalyses the reaction S-sulfanyl-L-cysteinyl-[protein] + uridine(34) in tRNA + AH2 + ATP = 2-thiouridine(34) in tRNA + L-cysteinyl-[protein] + A + AMP + diphosphate + H(+). Functionally, catalyzes the 2-thiolation of uridine at the wobble position (U34) of tRNA, leading to the formation of s(2)U34. The sequence is that of tRNA-specific 2-thiouridylase MnmA from Clostridium beijerinckii (strain ATCC 51743 / NCIMB 8052) (Clostridium acetobutylicum).